Consider the following 194-residue polypeptide: Probable GTP-binding protein EngB (194 aa).

In terms of domain architecture, EngB-type G spans 22-194 (KIPQIAIVGK…LRIFEEVIEK (173 aa)). GTP-binding positions include 30–37 (GKSNVGKS), 57–61 (GKTRG), 75–78 (DLPG), 142–145 (TKAD), and 173–175 (FSA). The Mg(2+) site is built by Ser-37 and Thr-59.

This sequence belongs to the TRAFAC class TrmE-Era-EngA-EngB-Septin-like GTPase superfamily. EngB GTPase family. Requires Mg(2+) as cofactor.

Its function is as follows. Necessary for normal cell division and for the maintenance of normal septation. In Caldanaerobacter subterraneus subsp. tengcongensis (strain DSM 15242 / JCM 11007 / NBRC 100824 / MB4) (Thermoanaerobacter tengcongensis), this protein is Probable GTP-binding protein EngB.